The following is a 143-amino-acid chain: Ribonuclease P protein component (143 aa).

A disordered region spans residues R111–P143.

This sequence belongs to the RnpA family. As to quaternary structure, consists of a catalytic RNA component (M1 or rnpB) and a protein subunit.

It carries out the reaction Endonucleolytic cleavage of RNA, removing 5'-extranucleotides from tRNA precursor.. Functionally, RNaseP catalyzes the removal of the 5'-leader sequence from pre-tRNA to produce the mature 5'-terminus. It can also cleave other RNA substrates such as 4.5S RNA. The protein component plays an auxiliary but essential role in vivo by binding to the 5'-leader sequence and broadening the substrate specificity of the ribozyme. The sequence is that of Ribonuclease P protein component from Deinococcus geothermalis (strain DSM 11300 / CIP 105573 / AG-3a).